The sequence spans 521 residues: uncharacterized protein (521 aa).

Residues Met1–Ala22 form the signal peptide. Cys23 is lipidated: N-palmitoyl cysteine. Residue Cys23 is the site of S-diacylglycerol cysteine attachment.

Belongs to the MG067/MG068/MG395 family.

Its subcellular location is the cell membrane. This is an uncharacterized protein from Mycoplasma pneumoniae (strain ATCC 29342 / M129 / Subtype 1) (Mycoplasmoides pneumoniae).